Reading from the N-terminus, the 493-residue chain is tRNA(Ile)-lysidine synthase (493 aa).

26–31 (SGGSDS) is a binding site for ATP.

Belongs to the tRNA(Ile)-lysidine synthase family.

The protein localises to the cytoplasm. It carries out the reaction cytidine(34) in tRNA(Ile2) + L-lysine + ATP = lysidine(34) in tRNA(Ile2) + AMP + diphosphate + H(+). Ligates lysine onto the cytidine present at position 34 of the AUA codon-specific tRNA(Ile) that contains the anticodon CAU, in an ATP-dependent manner. Cytidine is converted to lysidine, thus changing the amino acid specificity of the tRNA from methionine to isoleucine. This Bartonella henselae (strain ATCC 49882 / DSM 28221 / CCUG 30454 / Houston 1) (Rochalimaea henselae) protein is tRNA(Ile)-lysidine synthase.